We begin with the raw amino-acid sequence, 321 residues long: MASSQGKNELKFADWMATLPESIHSIPLTNLAIPGSHDSFSFYIDEASPVGPEQPETVQNFVSVFGTVAKKLMRKWLATQTMNFTGQLGAGIRYFDLRISTKPRDPDNELYFAHGLFSAKVNEGLEEINAFLTDHHKELVFLDFNHFYGMQKYHHEKLVQMLKDIYGNKMCPAIFAQEVSLKYLWEKDYQVLVFYHSPVALEVPFLWPGQMMPAPWANTTDPEKLIQFLQASITERRKKGSFFISQVVLTPKASTVVKGVASGLRETITERALPAMMQWVRTQKPGESGINIVTADFVELGDFISTVIKLNYVFEEGEANT.

A PI-PLC X-box domain is found at 22-197 (SIHSIPLTNL…DYQVLVFYHS (176 aa)). Catalysis depends on residues H37 and H114.

This chain is PI-PLC X domain-containing protein 3 (PLCXD3), found in Bos taurus (Bovine).